Consider the following 363-residue polypeptide: Ankyrin repeat domain-containing protein 40 (363 aa).

M1 is subject to N-acetylmethionine. ANK repeat units follow at residues 9-38 (EQQE…DVNS) and 43-72 (NGWT…DREI). Residues 135-167 (DSTQLQNGGPSPPPVSPPADSSPPLLPPTETPL) form a disordered region. Positions 144 to 164 (PSPPPVSPPADSSPPLLPPTE) are enriched in pro residues. S176 carries the post-translational modification Phosphoserine.

This is Ankyrin repeat domain-containing protein 40 (Ankrd40) from Mus musculus (Mouse).